A 157-amino-acid chain; its full sequence is S-ribosylhomocysteine lyase (157 aa).

Residues H54, H58, and C126 each contribute to the Fe cation site.

This sequence belongs to the LuxS family. As to quaternary structure, homodimer. Fe cation is required as a cofactor.

It carries out the reaction S-(5-deoxy-D-ribos-5-yl)-L-homocysteine = (S)-4,5-dihydroxypentane-2,3-dione + L-homocysteine. Its function is as follows. Involved in the synthesis of autoinducer 2 (AI-2) which is secreted by bacteria and is used to communicate both the cell density and the metabolic potential of the environment. The regulation of gene expression in response to changes in cell density is called quorum sensing. Catalyzes the transformation of S-ribosylhomocysteine (RHC) to homocysteine (HC) and 4,5-dihydroxy-2,3-pentadione (DPD). The chain is S-ribosylhomocysteine lyase from Bacillus cytotoxicus (strain DSM 22905 / CIP 110041 / 391-98 / NVH 391-98).